The following is a 119-amino-acid chain: Large ribosomal subunit protein bL20 (119 aa).

The protein belongs to the bacterial ribosomal protein bL20 family.

In terms of biological role, binds directly to 23S ribosomal RNA and is necessary for the in vitro assembly process of the 50S ribosomal subunit. It is not involved in the protein synthesizing functions of that subunit. The sequence is that of Large ribosomal subunit protein bL20 from Rhodopseudomonas palustris (strain BisA53).